We begin with the raw amino-acid sequence, 66 residues long: Neurotoxin-like protein STR1 (66 aa).

The 64-residue stretch at 2–65 (RDGYIVHDGT…VWGEDGFMCW (64 aa)) folds into the LCN-type CS-alpha/beta domain. Cystine bridges form between cysteine 13/cysteine 64, cysteine 17/cysteine 40, cysteine 26/cysteine 45, and cysteine 30/cysteine 47.

Belongs to the long (4 C-C) scorpion toxin superfamily. Sodium channel inhibitor family. Beta subfamily. In terms of tissue distribution, expressed by the venom gland.

Its subcellular location is the secreted. In terms of biological role, this protein is not toxic. This is Neurotoxin-like protein STR1 from Androctonus australis (Sahara scorpion).